Consider the following 29-residue polypeptide: Cliotide T18 (29 aa).

Positions 1–29 (GLPICGETCFTGTCYTPGCTCSYPVCKKN) form a cross-link, cyclopeptide (Gly-Asn). 3 disulfide bridges follow: C5/C19, C9/C21, and C14/C26.

Post-translationally, contains 3 disulfide bonds. This is a cyclic peptide. As to expression, expressed in root nodules but not in seed.

Its function is as follows. Probably participates in a plant defense mechanism. The chain is Cliotide T18 from Clitoria ternatea (Butterfly pea).